The sequence spans 199 residues: Cytochrome c oxidase assembly protein CtaG (199 aa).

The Cytoplasmic segment spans residues 1-12; the sequence is MTNTPQTPPKER. The helical; Signal-anchor for type II membrane protein transmembrane segment at 13–35 threads the bilayer; that stretch reads ANGVIVGACLAFVAGMVGMAYAA. The Periplasmic portion of the chain corresponds to 36 to 199; the sequence is VPLYDMFCRV…VKDGETENRL (164 aa).

This sequence belongs to the COX11/CtaG family.

Its subcellular location is the cell inner membrane. Functionally, exerts its effect at some terminal stage of cytochrome c oxidase synthesis, probably by being involved in the insertion of the copper B into subunit I. In Sinorhizobium fredii (strain NBRC 101917 / NGR234), this protein is Cytochrome c oxidase assembly protein CtaG.